The primary structure comprises 306 residues: Pantothenate kinase (306 aa).

91–98 (GSVAVGKS) is a binding site for ATP.

The protein belongs to the prokaryotic pantothenate kinase family.

Its subcellular location is the cytoplasm. It catalyses the reaction (R)-pantothenate + ATP = (R)-4'-phosphopantothenate + ADP + H(+). It participates in cofactor biosynthesis; coenzyme A biosynthesis; CoA from (R)-pantothenate: step 1/5. This Streptococcus suis (strain 98HAH33) protein is Pantothenate kinase.